Consider the following 218-residue polypeptide: Copper acquisition factor BIM1 (218 aa).

The N-terminal stretch at 1-19 (MFALKFILITSFIASTALA) is a signal peptide. The Cu(2+) site is built by H20 and H65. 2 cysteine pairs are disulfide-bonded: C40–C144 and C110–C161. Residues N87, N91, and N124 are each glycosylated (N-linked (GlcNAc...) asparagine). A Cu(2+)-binding site is contributed by D138. 2 N-linked (GlcNAc...) asparagine glycosylation sites follow: N158 and N170. Residues 160–194 (TCTDDASRTSNASSTSSGSATATSAAATSSSSGTS) form a disordered region. Positions 167–194 (RTSNASSTSSGSATATSAAATSSSSGTS) are enriched in low complexity. The GPI-anchor amidated serine moiety is linked to residue S190. The propeptide at 191–218 (SGTSGAIKEVVGLGALSLALGIAGLIIL) is removed in mature form.

It belongs to the X325 family. The cofactor is Cu(2+).

The protein localises to the cell membrane. In terms of biological role, lytic polysaccharide monooxygenase-like protein that has diverged to biological functions other than polysaccharide degradation since it does not perform oxidative cleavage of polysaccharides. Cell surface-bound protein that functions in the copper-accumulation pathway shared by the CUF1-dependent copper transporter CTR1. Involved in maintaining cell wall integrity during copper deficiency. Binds Cu(2+) with an estimated 1:1 stoichiometry and might serve as an extracellular copper ligand. FRE4 and FRE7 metalloreductases probably function together with CTR1 and BIM1 to liberate the Cu(2+) bound to the BIM1 copper-binding site for subsequent import of Cu(+) into the cell by CTR1, via the reduction of BIM1-bound Cu(2+) to Cu(+) to reduce binding affinity for BIM1 but increase affinity for CTR1. Facilitates copper acquisition in the brain of mammalian hosts and acts as a copper-dependent virulence trait in fungal meningitis. While BIM1 plays a critical role in cryptococcal meningitis, at least in part through its role in copper acquisition, it could play additional roles during copper limitation or as a means to invade and colonize host tissues in the brain, by compromising host carbohydrate integrity via its lytic polysaccharide monooxygenase (LPMO) activity, which has still to be determined. This is Copper acquisition factor BIM1 from Cryptococcus neoformans var. neoformans serotype D (strain JEC21 / ATCC MYA-565) (Filobasidiella neoformans).